The sequence spans 422 residues: MRLSKYYLPTLKEKPAHAKIISHQYSLRAGLIKQIASGIYSWLPLGLLVLKNIEDIIRDEMDKSGAIEVLMPCVQPANLWRESGRYDDYGKEMLRIKDRHEEDMLFGPTHEEVATDLIRDVVKSYKDLPLCLYQIQWKFRDEVRPRYGVMRGREFLMKDAYSFDVDYEGALNSYNLMYKTYIKIFKRMGLTPIGVRADTGPIGGNLSHEFHILANTGESTLYYDNKFSELLESEDVESLKSIYAVADDMHDPETCPISQEQLNVSKGIEIGHIFYFGDKYSKPMKASVTSQDGKNVNIHMGSYGIGVSRLVGAIIEAFHDDKGIIWPESVAPFRIGLINLQTKVTEAADKIYKALKSDEVLYDDTEGSVGVKFSRMDLIGLPWQIIVGKKAIDEKIVEVKNRATGEVKEMQIEEAINHFSTK.

It belongs to the class-II aminoacyl-tRNA synthetase family. ProS type 2 subfamily. Homodimer.

The protein localises to the cytoplasm. It catalyses the reaction tRNA(Pro) + L-proline + ATP = L-prolyl-tRNA(Pro) + AMP + diphosphate. Its function is as follows. Catalyzes the attachment of proline to tRNA(Pro) in a two-step reaction: proline is first activated by ATP to form Pro-AMP and then transferred to the acceptor end of tRNA(Pro). This is Proline--tRNA ligase from Wolbachia sp. subsp. Drosophila simulans (strain wRi).